A 34-amino-acid polypeptide reads, in one-letter code: Surfactant protein C (34 aa).

A lipid anchor (S-palmitoyl cysteine) is attached at Cys-4.

It is found in the secreted. The protein localises to the extracellular space. Its subcellular location is the surface film. Its function is as follows. Pulmonary surfactant associated proteins promote alveolar stability by lowering the surface tension at the air-liquid interface in the peripheral air spaces. In Canis lupus familiaris (Dog), this protein is Surfactant protein C (SFTPC).